An 886-amino-acid chain; its full sequence is MSGVNEIRSTFLDYFAKHGHEVVPSSPLVPRNDPTLMFTNAGMVQFKNVFTGVEKRPYHRAATAQKCVRAGGKHNDLDNVGYTARHHTFFEMLGNFSFGDYFKPLAIELAWNLVTKEFGLDRSKLLVTVYADDDDAATLWRKIAGFPEERIIRIGTSDNFWQMGDTGPCGPCSEIFIDQGPELWGGPPGSPEEDGDRFLEFWNLVFMQYEQIEPGNRVGLPRPSIDTGMGLERMAAILQGVKSNYDTDLFRSLIDAVAHQVGRPPEGAQTASYRVIADHLRAASFLVADGVLPGNEGRGYVLRRIMRRAMRHAQLLGARDPMMYRLVPTLVREMGQAYPELVRAESLISETLRLEETRFRRTLERGLSILDAETRDLSEGQNLSGETAFTLYDTYGFPLDLTQDALKSRGIGVDTDAFKAAMERQRAAARAAWAGSGEAATETLWYALRERVGATEFLGYEAETAEGVVTALVRGGVEVEALASGEEGLLVVSQTPFYGESGGQVGDTGTVAAAGLRARVTDTEKKLGDLFVHHVAVEEGRLTVGQAVELRVDHARRAAIRAHHSATHLLHEALRQVLGDHVAQKGSLVSPERLRFDFSHPKPMNDDEVAAVEEMANRVLLQNGPVVTKLMAVDDAIATGARALFGEKYGDEVRVVSMGEDQGGDGRRRTFSVELCGGTHVGRTGEIGLITVVGEGAVASGVRRIEAMTGDAARRHLAEESRRLAAVAGLLKVPPAEAADRLAALIEDRRRLERELSEARRKLAMGGGGAGEEPVREVAGVKLMARSVEGVEMRDLKSLADEGKKRLGSGVVAIVGVAPDGKAGLVVGVTDDLTDRFDAVALVRAGSERLGGKGGGGRRDMAQAGGPDGAAAQDALAAIEAALAAA.

4 residues coordinate Zn(2+): histidine 564, histidine 568, cysteine 676, and histidine 680.

The protein belongs to the class-II aminoacyl-tRNA synthetase family. Zn(2+) serves as cofactor.

The protein resides in the cytoplasm. The catalysed reaction is tRNA(Ala) + L-alanine + ATP = L-alanyl-tRNA(Ala) + AMP + diphosphate. Catalyzes the attachment of alanine to tRNA(Ala) in a two-step reaction: alanine is first activated by ATP to form Ala-AMP and then transferred to the acceptor end of tRNA(Ala). Also edits incorrectly charged Ser-tRNA(Ala) and Gly-tRNA(Ala) via its editing domain. The protein is Alanine--tRNA ligase of Methylobacterium sp. (strain 4-46).